We begin with the raw amino-acid sequence, 259 residues long: Phosphate import ATP-binding protein PstB (259 aa).

Residues 2-248 (GQRIDVNHEN…ITMFNNPQNE (247 aa)) form the ABC transporter domain. 37 to 44 (GPSGCGKS) lines the ATP pocket.

This sequence belongs to the ABC transporter superfamily. Phosphate importer (TC 3.A.1.7) family. The complex is composed of two ATP-binding proteins (PstB), two transmembrane proteins (PstC and PstA) and a solute-binding protein (PstS).

The protein resides in the cell membrane. It catalyses the reaction phosphate(out) + ATP + H2O = ADP + 2 phosphate(in) + H(+). Functionally, part of the ABC transporter complex PstSACB involved in phosphate import. Responsible for energy coupling to the transport system. In Bifidobacterium longum (strain NCC 2705), this protein is Phosphate import ATP-binding protein PstB.